Here is a 239-residue protein sequence, read N- to C-terminus: Ribonuclease PH (239 aa).

Phosphate-binding positions include R86 and 124 to 126 (GTR).

This sequence belongs to the RNase PH family. Homohexameric ring arranged as a trimer of dimers.

The enzyme catalyses tRNA(n+1) + phosphate = tRNA(n) + a ribonucleoside 5'-diphosphate. In terms of biological role, phosphorolytic 3'-5' exoribonuclease that plays an important role in tRNA 3'-end maturation. Removes nucleotide residues following the 3'-CCA terminus of tRNAs; can also add nucleotides to the ends of RNA molecules by using nucleoside diphosphates as substrates, but this may not be physiologically important. Probably plays a role in initiation of 16S rRNA degradation (leading to ribosome degradation) during starvation. This chain is Ribonuclease PH, found in Azoarcus sp. (strain BH72).